Reading from the N-terminus, the 141-residue chain is Large ribosomal subunit protein uL11 (141 aa).

It belongs to the universal ribosomal protein uL11 family. Part of the ribosomal stalk of the 50S ribosomal subunit. Interacts with L10 and the large rRNA to form the base of the stalk. L10 forms an elongated spine to which L12 dimers bind in a sequential fashion forming a multimeric L10(L12)X complex. In terms of processing, one or more lysine residues are methylated.

Forms part of the ribosomal stalk which helps the ribosome interact with GTP-bound translation factors. In Microcystis aeruginosa (strain NIES-843 / IAM M-2473), this protein is Large ribosomal subunit protein uL11.